The following is a 142-amino-acid chain: Ribosome-binding factor A (142 aa).

It belongs to the RbfA family. In terms of assembly, monomer. Binds 30S ribosomal subunits, but not 50S ribosomal subunits or 70S ribosomes.

It localises to the cytoplasm. Functionally, one of several proteins that assist in the late maturation steps of the functional core of the 30S ribosomal subunit. Associates with free 30S ribosomal subunits (but not with 30S subunits that are part of 70S ribosomes or polysomes). Required for efficient processing of 16S rRNA. May interact with the 5'-terminal helix region of 16S rRNA. This Leifsonia xyli subsp. xyli (strain CTCB07) protein is Ribosome-binding factor A.